The primary structure comprises 115 residues: MFSIIQKIEKEQIKKNIPIFRSGDTIEVKVWVIEGSKKRLQSFEGIVIAIKNRCLNSSFTVRKISNGEGVERVFQTHSHGIEEILVKRRGLVRKAKLYYLRTRTGKAARIKERLN.

Belongs to the bacterial ribosomal protein bL19 family.

This protein is located at the 30S-50S ribosomal subunit interface and may play a role in the structure and function of the aminoacyl-tRNA binding site. The chain is Large ribosomal subunit protein bL19 from Buchnera aphidicola subsp. Acyrthosiphon pisum (strain 5A).